Here is a 169-residue protein sequence, read N- to C-terminus: Large ribosomal subunit protein bL19m (169 aa).

The transit peptide at 1–16 (MWSRNVRLLGSWTRSY) directs the protein to the mitochondrion.

This sequence belongs to the bacterial ribosomal protein bL19 family. As to quaternary structure, component of the mitochondrial large ribosomal subunit (mt-LSU). Mature yeast 74S mitochondrial ribosomes consist of a small (37S) and a large (54S) subunit. The 37S small subunit contains a 15S ribosomal RNA (15S mt-rRNA) and 34 different proteins. The 54S large subunit contains a 21S rRNA (21S mt-rRNA) and 46 different proteins.

It is found in the mitochondrion. Functionally, component of the mitochondrial ribosome (mitoribosome), a dedicated translation machinery responsible for the synthesis of mitochondrial genome-encoded proteins, including at least some of the essential transmembrane subunits of the mitochondrial respiratory chain. The mitoribosomes are attached to the mitochondrial inner membrane and translation products are cotranslationally integrated into the membrane. bL19m is essential for respiration. This Saccharomyces cerevisiae (strain ATCC 204508 / S288c) (Baker's yeast) protein is Large ribosomal subunit protein bL19m (IMG1).